A 179-amino-acid chain; its full sequence is Large ribosomal subunit protein uL5 (179 aa).

The protein belongs to the universal ribosomal protein uL5 family. As to quaternary structure, part of the 50S ribosomal subunit; part of the 5S rRNA/L5/L18/L25 subcomplex. Contacts the 5S rRNA and the P site tRNA. Forms a bridge to the 30S subunit in the 70S ribosome.

Its function is as follows. This is one of the proteins that bind and probably mediate the attachment of the 5S RNA into the large ribosomal subunit, where it forms part of the central protuberance. In the 70S ribosome it contacts protein S13 of the 30S subunit (bridge B1b), connecting the 2 subunits; this bridge is implicated in subunit movement. Contacts the P site tRNA; the 5S rRNA and some of its associated proteins might help stabilize positioning of ribosome-bound tRNAs. This Marinobacter nauticus (strain ATCC 700491 / DSM 11845 / VT8) (Marinobacter aquaeolei) protein is Large ribosomal subunit protein uL5.